We begin with the raw amino-acid sequence, 393 residues long: Probable acetyl-CoA acyltransferase (393 aa).

The active-site Acyl-thioester intermediate is the cysteine 88. Active-site proton acceptor residues include histidine 349 and cysteine 378.

It belongs to the thiolase-like superfamily. Thiolase family.

It localises to the cytoplasm. The enzyme catalyses 2 acetyl-CoA = acetoacetyl-CoA + CoA. The sequence is that of Probable acetyl-CoA acyltransferase from Staphylococcus aureus (strain NCTC 8325 / PS 47).